The chain runs to 63 residues: Hypoxia-inducible lipid droplet-associated protein (63 aa).

Positions 1 to 37 (MKHVLNLYLLGVVLTLLSIFVRVMESLEGLLESPSPG) are required for targeting to lipid droplets. The helical transmembrane segment at 7–23 (LYLLGVVLTLLSIFVRV) threads the bilayer. Residues 31 to 63 (LESPSPGTSWTTRSQLANTEPTKGLPDHPSRSM) are disordered. Polar residues predominate over residues 35–51 (SPGTSWTTRSQLANTEP). Ser-44 bears the Phosphoserine mark.

In terms of tissue distribution, highly expressed in renal cell carcinoma cells but barely detectable in adjacent normal kidney tissue. Detected in some cervical and endometrial cancers. Expression also detected in fetal kidney with little or no expression observed in normal adult heart, liver, lung, pancreas, prostate or spinal cord (at protein level).

Its subcellular location is the lipid droplet. It localises to the secreted. It is found in the membrane. Its function is as follows. Increases intracellular lipid accumulation. Stimulates expression of cytokines including IL6, MIF and VEGFA. Enhances cell growth and proliferation. The chain is Hypoxia-inducible lipid droplet-associated protein (HILPDA) from Homo sapiens (Human).